A 55-amino-acid polypeptide reads, in one-letter code: Large ribosomal subunit protein bL33 (55 aa).

It belongs to the bacterial ribosomal protein bL33 family.

In Alcanivorax borkumensis (strain ATCC 700651 / DSM 11573 / NCIMB 13689 / SK2), this protein is Large ribosomal subunit protein bL33.